The following is a 374-amino-acid chain: Glutamate 5-kinase (374 aa).

An ATP-binding site is contributed by Lys-8. Residues Ser-49, Asp-136, and Asn-148 each contribute to the substrate site. ATP-binding positions include 168-169 and 211-217; these read TD and TGGMQTK. One can recognise a PUA domain in the interval 276-354; sequence QGILTLDDGA…TQIRQILGYG (79 aa).

This sequence belongs to the glutamate 5-kinase family.

The protein localises to the cytoplasm. It carries out the reaction L-glutamate + ATP = L-glutamyl 5-phosphate + ADP. The protein operates within amino-acid biosynthesis; L-proline biosynthesis; L-glutamate 5-semialdehyde from L-glutamate: step 1/2. In terms of biological role, catalyzes the transfer of a phosphate group to glutamate to form L-glutamate 5-phosphate. The polypeptide is Glutamate 5-kinase (Picosynechococcus sp. (strain ATCC 27264 / PCC 7002 / PR-6) (Agmenellum quadruplicatum)).